The following is a 490-amino-acid chain: Protein nucleotidyltransferase YdiU (490 aa).

8 residues coordinate ATP: glycine 92, glycine 94, arginine 95, lysine 114, aspartate 126, glycine 127, arginine 177, and arginine 184. Aspartate 256 (proton acceptor) is an active-site residue. The Mg(2+) site is built by asparagine 257 and aspartate 266. Aspartate 266 serves as a coordination point for ATP.

The protein belongs to the SELO family. Mg(2+) serves as cofactor. Requires Mn(2+) as cofactor.

It catalyses the reaction L-seryl-[protein] + ATP = 3-O-(5'-adenylyl)-L-seryl-[protein] + diphosphate. It carries out the reaction L-threonyl-[protein] + ATP = 3-O-(5'-adenylyl)-L-threonyl-[protein] + diphosphate. The enzyme catalyses L-tyrosyl-[protein] + ATP = O-(5'-adenylyl)-L-tyrosyl-[protein] + diphosphate. The catalysed reaction is L-histidyl-[protein] + UTP = N(tele)-(5'-uridylyl)-L-histidyl-[protein] + diphosphate. It catalyses the reaction L-seryl-[protein] + UTP = O-(5'-uridylyl)-L-seryl-[protein] + diphosphate. It carries out the reaction L-tyrosyl-[protein] + UTP = O-(5'-uridylyl)-L-tyrosyl-[protein] + diphosphate. Its function is as follows. Nucleotidyltransferase involved in the post-translational modification of proteins. It can catalyze the addition of adenosine monophosphate (AMP) or uridine monophosphate (UMP) to a protein, resulting in modifications known as AMPylation and UMPylation. The chain is Protein nucleotidyltransferase YdiU from Bordetella avium (strain 197N).